A 25-amino-acid polypeptide reads, in one-letter code: Germin-like protein (25 aa).

It belongs to the germin family.

The chain is Germin-like protein from Populus euphratica (Euphrates poplar).